The following is a 343-amino-acid chain: Phosphoribosylformylglycinamidine cyclo-ligase (343 aa).

It belongs to the AIR synthase family.

The protein localises to the cytoplasm. It catalyses the reaction 2-formamido-N(1)-(5-O-phospho-beta-D-ribosyl)acetamidine + ATP = 5-amino-1-(5-phospho-beta-D-ribosyl)imidazole + ADP + phosphate + H(+). It functions in the pathway purine metabolism; IMP biosynthesis via de novo pathway; 5-amino-1-(5-phospho-D-ribosyl)imidazole from N(2)-formyl-N(1)-(5-phospho-D-ribosyl)glycinamide: step 2/2. This Staphylococcus epidermidis (strain ATCC 35984 / DSM 28319 / BCRC 17069 / CCUG 31568 / BM 3577 / RP62A) protein is Phosphoribosylformylglycinamidine cyclo-ligase.